The following is a 394-amino-acid chain: Flavohemoprotein (394 aa).

The Globin domain maps to 1-136 (MISQQTIDIV…LANVFITREE (136 aa)). Residue histidine 85 participates in heme b binding. Active-site charge relay system residues include tyrosine 95 and glutamate 135. Residues 147–394 (GGWRGTREFT…YECFGPHKVL (248 aa)) are reductase. Positions 150–255 (RGTREFTLIE…AAPAGDFFLD (106 aa)) constitute an FAD-binding FR-type domain. FAD-binding positions include tyrosine 188 and 204–207 (RQYS). 268-273 (GVGLTP) is an NADP(+) binding site. FAD is bound at residue 387–390 (CFGP).

This sequence belongs to the globin family. Two-domain flavohemoproteins subfamily. It in the C-terminal section; belongs to the flavoprotein pyridine nucleotide cytochrome reductase family. It depends on heme b as a cofactor. Requires FAD as cofactor.

It catalyses the reaction 2 nitric oxide + NADPH + 2 O2 = 2 nitrate + NADP(+) + H(+). The enzyme catalyses 2 nitric oxide + NADH + 2 O2 = 2 nitrate + NAD(+) + H(+). Functionally, is involved in NO detoxification in an aerobic process, termed nitric oxide dioxygenase (NOD) reaction that utilizes O(2) and NAD(P)H to convert NO to nitrate, which protects the bacterium from various noxious nitrogen compounds. Therefore, plays a central role in the inducible response to nitrosative stress. The sequence is that of Flavohemoprotein from Photobacterium profundum (strain SS9).